We begin with the raw amino-acid sequence, 208 residues long: Adenylyl-sulfate kinase (208 aa).

An ATP-binding site is contributed by 35-42 (GLSGSGKS). Catalysis depends on S109, which acts as the Phosphoserine intermediate.

This sequence belongs to the APS kinase family.

The catalysed reaction is adenosine 5'-phosphosulfate + ATP = 3'-phosphoadenylyl sulfate + ADP + H(+). It functions in the pathway sulfur metabolism; hydrogen sulfide biosynthesis; sulfite from sulfate: step 2/3. Functionally, catalyzes the synthesis of activated sulfate. The polypeptide is Adenylyl-sulfate kinase (Geotalea uraniireducens (strain Rf4) (Geobacter uraniireducens)).